The chain runs to 318 residues: Probable 3-hydroxyisobutyrate dehydrogenase-like 3, mitochondrial (318 aa).

NAD(+)-binding positions include 35 to 64 and serine 129; that span reads TRIG…TVYA. Residue lysine 203 is part of the active site. Lysine 271 is a binding site for NAD(+).

This sequence belongs to the HIBADH-related family. 3-hydroxyisobutyrate dehydrogenase subfamily.

It is found in the mitochondrion. The catalysed reaction is 3-hydroxy-2-methylpropanoate + NAD(+) = 2-methyl-3-oxopropanoate + NADH + H(+). Its pathway is amino-acid degradation; L-valine degradation. This Arabidopsis thaliana (Mouse-ear cress) protein is Probable 3-hydroxyisobutyrate dehydrogenase-like 3, mitochondrial.